A 310-amino-acid polypeptide reads, in one-letter code: Isoflavone reductase homolog A622 (310 aa).

NADP(+) is bound by residues 13–19 (GGTGYIG), Arg-38, and Lys-47. The active-site Proton acceptor is the Lys-135. Residue Arg-139 coordinates NADP(+).

Belongs to the NmrA-type oxidoreductase family. Isoflavone reductase subfamily. As to quaternary structure, monomer.

It localises to the cytoplasm. The protein operates within alkaloid biosynthesis; nicotine biosynthesis. NADPH-binding protein. Involved in the biosynthesis of pyridine alkaloid natural products, leading mainly to the production of anabasine, anatabine, nicotine and nornicotine, effective deterrents against herbivores with antiparasitic and pesticide properties (neurotoxins); nornicotine serves as the precursor in the synthesis of the carcinogen compound N'-nitrosonornicotine (NNN). Reductase involved in a late step of tobacco alkaloid biosynthesis. Triggers either the formation of a nicotinic acid-derived precursor or the final condensation reaction of tobacco alkaloids. This chain is Isoflavone reductase homolog A622, found in Nicotiana glauca (Glaucous tobacco).